The chain runs to 100 residues: Large ribosomal subunit protein uL23 (100 aa).

Belongs to the universal ribosomal protein uL23 family. Part of the 50S ribosomal subunit. Contacts protein L29, and trigger factor when it is bound to the ribosome.

One of the early assembly proteins it binds 23S rRNA. One of the proteins that surrounds the polypeptide exit tunnel on the outside of the ribosome. Forms the main docking site for trigger factor binding to the ribosome. This chain is Large ribosomal subunit protein uL23, found in Corynebacterium aurimucosum (strain ATCC 700975 / DSM 44827 / CIP 107346 / CN-1) (Corynebacterium nigricans).